We begin with the raw amino-acid sequence, 320 residues long: tRNA uridine(34) hydroxylase (320 aa).

Residues 123–217 (EDENTVILDA…YGKDPETKGL (95 aa)) enclose the Rhodanese domain. Catalysis depends on Cys177, which acts as the Cysteine persulfide intermediate.

The protein belongs to the TrhO family.

The enzyme catalyses uridine(34) in tRNA + AH2 + O2 = 5-hydroxyuridine(34) in tRNA + A + H2O. In terms of biological role, catalyzes oxygen-dependent 5-hydroxyuridine (ho5U) modification at position 34 in tRNAs. This Staphylococcus epidermidis (strain ATCC 35984 / DSM 28319 / BCRC 17069 / CCUG 31568 / BM 3577 / RP62A) protein is tRNA uridine(34) hydroxylase.